The sequence spans 258 residues: Isoprenyl transferase 2 (258 aa).

Residue Asp-39 is part of the active site. Mg(2+) is bound at residue Asp-39. Substrate contacts are provided by residues 40–43 (GNRR), Trp-44, Arg-52, His-57, and 85–87 (SND). Residue Asn-88 is the Proton acceptor of the active site. Residues Arg-92, Arg-207, and 213–215 (RLS) contribute to the substrate site. Glu-226 provides a ligand contact to Mg(2+).

It belongs to the UPP synthase family. In terms of assembly, homodimer. The cofactor is Mg(2+).

Functionally, catalyzes the condensation of isopentenyl diphosphate (IPP) with allylic pyrophosphates generating different type of terpenoids. This Tropheryma whipplei (strain Twist) (Whipple's bacillus) protein is Isoprenyl transferase 2.